We begin with the raw amino-acid sequence, 244 residues long: Non-structural protein 3 (244 aa).

The protein belongs to the aquareoviridae NS3 protein family.

The polypeptide is Non-structural protein 3 (S11) (Notemigonus crysoleucas (Golden shiner)).